Reading from the N-terminus, the 469-residue chain is UDP-N-acetylmuramate--L-alanine ligase (469 aa).

Residue 123 to 129 coordinates ATP; the sequence is GSHGKTT.

It belongs to the MurCDEF family.

Its subcellular location is the cytoplasm. It carries out the reaction UDP-N-acetyl-alpha-D-muramate + L-alanine + ATP = UDP-N-acetyl-alpha-D-muramoyl-L-alanine + ADP + phosphate + H(+). The protein operates within cell wall biogenesis; peptidoglycan biosynthesis. Cell wall formation. The sequence is that of UDP-N-acetylmuramate--L-alanine ligase from Synechococcus sp. (strain CC9605).